The primary structure comprises 1786 residues: Transcription initiation factor TFIID subunit 1b (1786 aa).

Disordered regions lie at residues 54–83 and 350–372; these read EDYD…PVVL and FGSR…PQLL. Residues 61 to 83 show a composition bias toward basic and acidic residues; that stretch reads GQEKEHVPVEKSFDSEEREPVVL. Residues 352–362 show a composition bias toward polar residues; sequence SRGSQSTNEST. The 77-residue stretch at 574–650 folds into the Ubiquitin-like domain; the sequence is MTIVVKSLGG…VHLLRTKVHL (77 aa). Residues 1303–1313 show a composition bias toward basic residues; it reads MKTNKHCPKYR. Disordered regions lie at residues 1303 to 1382, 1397 to 1471, and 1596 to 1634; these read MKTN…DVAA, LKIS…KDQA, and SERE…ESGQ. A compositionally biased stretch (polar residues) spans 1357 to 1377; sequence TKISVNEATKVGDSTSKTPGS. The segment covering 1397–1407 has biased composition (basic residues); it reads LKISSKAKPKA. The segment covering 1433–1464 has biased composition (polar residues); the sequence is HNPSVSGQLLPSTETDQAASSRYTTSVPQPSL. Coiled-coil stretches lie at residues 1591 to 1620 and 1752 to 1786; these read REVI…LENY and LADE…DSLR. The segment covering 1604–1613 has biased composition (basic residues); the sequence is RKAKQKKKLQ. A Bromo domain is found at 1656-1774; it reads KRRKKGQVGL…DEYRDELKEA (119 aa).

It belongs to the TAF1 family. Component of the TFIID complex. TFIID is composed of TATA binding protein (TBP) and a number of TBP-associated factors (TAFs) whose MWs range from 14-217 kDa. Expressed in roots, shoots, leaves and inflorescences.

Its subcellular location is the nucleus. Its function is as follows. TAFs are components of the transcription factor IID (TFIID) complex that is essential for mediating regulation of RNA polymerase transcription. Core scaffold of the TFIID complex. Acts as a histone acetyltransferase involved in the light regulation of growth and gene expression. Required for H3K9, H3K27, and H4K12 acetylation on the target promoters. The chain is Transcription initiation factor TFIID subunit 1b (TAF1B) from Arabidopsis thaliana (Mouse-ear cress).